The primary structure comprises 109 residues: Sperm-specific class P protein 16 (109 aa).

In terms of domain architecture, MSP spans Ser2 to Ala109.

As to expression, expressed at higher level in testis.

The protein is Sperm-specific class P protein 16 (ssp-16) of Caenorhabditis elegans.